A 173-amino-acid polypeptide reads, in one-letter code: Alpha-crystallin B chain (173 aa).

Methionine 1 is modified (N-acetylmethionine). In terms of domain architecture, sHSP spans 54–162 (RLPSWIESGL…PERSIPITRE (109 aa)). Histidine 81, histidine 102, glutamate 104, and histidine 109 together coordinate Zn(2+).

Belongs to the small heat shock protein (HSP20) family. As to quaternary structure, heteromer composed of three CRYAA and one CRYAB subunits. Aggregates with homologous proteins, including the small heat shock protein HSPB1, to form large heteromeric complexes. Inter-subunit bridging via zinc ions enhances stability, which is crucial as there is no protein turn over in the lens.

May contribute to the transparency and refractive index of the lens. This Aquarana catesbeiana (American bullfrog) protein is Alpha-crystallin B chain (CRYAB).